The sequence spans 1538 residues: Myosin-9 (1538 aa).

The Myosin N-terminal SH3-like domain maps to 16 to 65 (SIGSHVWFEDPEVAWIDGEVEKINGQEVVIQATTGKKVTAKLSKIYPKDV). Residues 70–740 (GGVDDMTKLS…QMAELDARRA (671 aa)) enclose the Myosin motor domain. ATP-binding positions include 164–171 (GESGAGKT) and 217–225 (NNNSSRFGK). 4 actin-binding regions span residues 503–537 (LIEK…YQTF), 539–562 (THKR…AGEV), 597–621 (FPPL…KLQL), and 621–643 (LQQL…KPNN). IQ domains are found at residues 743-772 (LSSA…ATIS), 766-795 (LRKA…EAAA), 791-820 (REAA…ASLV), 814-843 (LHVA…TKAA), 839-868 (QTKA…GVVL), and 862-891 (LKNG…AARE). Residues 892–1064 (TGALKEAKDM…VLRQQAVSMA (173 aa)) adopt a coiled-coil conformation. Residues 1017–1032 (SLEDKKKKLEETEKKG) are compositionally biased toward basic and acidic residues. Disordered regions lie at residues 1017–1041 (SLED…SLTR) and 1098–1121 (SHSI…NEKQ). In terms of domain architecture, Dilute spans 1168–1481 (DRIIQTIGHA…IANMRVLMTE (314 aa)).

The protein belongs to the TRAFAC class myosin-kinesin ATPase superfamily. Myosin family. Plant myosin class XI subfamily. As to quaternary structure, homodimer.

Its function is as follows. Myosin heavy chain that is required for the cell cycle-regulated transport of various organelles and proteins for their segregation. Functions by binding with its tail domain to receptor proteins on organelles and exerting force with its N-terminal motor domain against actin filaments, thereby transporting its cargo along polarized actin cables. Involved in trafficking of Golgi stacks and mitochondria. This is Myosin-9 (XI-C) from Arabidopsis thaliana (Mouse-ear cress).